The chain runs to 525 residues: MDVFAPTGNLHAGAIWPEVVVTLTLLIVLVVDLVGGSAARKSLPALSLFGLLGALVTLVLQWQQPQLESFLGSFAADPVSILFRGLVVATAALTVMMAERYFLQAGAPTGEFYVLLLTATLGGMFLAGATDLIMVFVSLETLGIASYLMAGYTKRDPRSSEAALKYLLTGASSTAIFLYGMSLLYGLSGGQTQLAAIAPYLANAGLVGILALVFCLGGIGFKLAAVPFHQWTPDVYEGSPTPVVAFLSVGSKAAGFALAIRFLATVFPAMTEEWRAVLSVLAILTMVLGNVVAIAQTRLKRLLAYSSIGQAGFVLIGLVAGTEAGYASLIFYLMVYLAMNLGAFLCVTLFSLKTGTDEINEYSGLYQKDPFLTLCLSICLLSLGGLPPLAGFFGKLYLFWAGWQAGEYTLVLVGLVTSVISIYYYVRVVKTMVVKEPQEMSLSVQNYPPTDWQAEGMPALRVGMVVTLVATIFAGILSNPLFTLSTQAVEQSPFLGFPTAQAFAPGSASPSLAVAGSAALPSRGS.

A run of 14 helical transmembrane segments spans residues 14–34, 42–62, 78–98, 117–137, 167–187, 201–221, 240–260, 276–296, 302–322, 330–350, 374–394, 396–416, 462–482, and 494–514; these read AIWPEVVVTLTLLIVLVVDLV, SLPALSLFGLLGALVTLVLQW, PVSILFRGLVVATAALTVMMA, LTATLGGMFLAGATDLIMVFV, LLTGASSTAIFLYGMSLLYGL, LANAGLVGILALVFCLGGIGF, PTPVVAFLSVGSKAAGFALAI, AVLSVLAILTMVLGNVVAIAQ, LLAYSSIGQAGFVLIGLVAGT, IFYLMVYLAMNLGAFLCVTLF, LCLSICLLSLGGLPPLAGFFG, LYLFWAGWQAGEYTLVLVGLV, VGMVVTLVATIFAGILSNPLF, and FLGFPTAQAFAPGSASPSLAV.

It belongs to the complex I subunit 2 family. NDH-1 can be composed of about 15 different subunits; different subcomplexes with different compositions have been identified which probably have different functions.

It localises to the cellular thylakoid membrane. The enzyme catalyses a plastoquinone + NADH + (n+1) H(+)(in) = a plastoquinol + NAD(+) + n H(+)(out). The catalysed reaction is a plastoquinone + NADPH + (n+1) H(+)(in) = a plastoquinol + NADP(+) + n H(+)(out). Its function is as follows. NDH-1 shuttles electrons from an unknown electron donor, via FMN and iron-sulfur (Fe-S) centers, to quinones in the respiratory and/or the photosynthetic chain. The immediate electron acceptor for the enzyme in this species is believed to be plastoquinone. Couples the redox reaction to proton translocation, and thus conserves the redox energy in a proton gradient. Cyanobacterial NDH-1 also plays a role in inorganic carbon-concentration. This chain is NAD(P)H-quinone oxidoreductase subunit 2, found in Synechococcus sp. (strain JA-3-3Ab) (Cyanobacteria bacterium Yellowstone A-Prime).